The chain runs to 2174 residues: Mediator of RNA polymerase II transcription subunit 13 (2174 aa).

S395 bears the Phosphoserine mark. Positions 435–477 (RNAGQQGQAPSLGQQQQILPKHKTNEKQEKSEKPQKRPLTPFH) are disordered. Positions 438-451 (GQQGQAPSLGQQQQ) are enriched in low complexity. The segment covering 457–469 (KTNEKQEKSEKPQ) has biased composition (basic and acidic residues). Phosphoserine occurs at positions 500, 504, 530, and 537. Over residues 709 to 730 (FPDKKDRQNSEREAGKKHKVED) the composition is skewed to basic and acidic residues. Disordered stretches follow at residues 709–735 (FPDK…TSSV), 749–769 (SPSI…PSTS), and 787–816 (FNSD…ESKT). Residues 805-815 (SDDKASCKESK) show a composition bias toward basic and acidic residues. Residues S826 and S890 each carry the phosphoserine modification. Residues 959–1054 (FIKEGDGSNM…ASTPSTCRPL (96 aa)) are disordered. Positions 992-1003 (PPSNSGAGILPS) are enriched in low complexity. Over residues 1004–1015 (PSTPRFPTPRTP) the composition is skewed to pro residues. S1029 is modified (phosphoserine). A compositionally biased stretch (polar residues) spans 1040–1053 (DLYSPASTPSTCRP). Short sequence motifs (LXXLL motif) lie at residues 1188–1192 (LILLL) and 1279–1283 (LRMLL). 2 stretches are compositionally biased toward polar residues: residues 1484–1498 (SQSL…NTGN) and 1563–1606 (SMNS…SLPT). Disordered regions lie at residues 1484-1505 (SQSL…PSAT), 1557-1617 (SFPP…ESTM), and 2015-2048 (LPAS…RLLS).

Belongs to the Mediator complex subunit 13 family. Component of the Mediator complex, which is composed of MED1, MED4, MED6, MED7, MED8, MED9, MED10, MED11, MED12, MED13, MED13L, MED14, MED15, MED16, MED17, MED18, MED19, MED20, MED21, MED22, MED23, MED24, MED25, MED26, MED27, MED29, MED30, MED31, CCNC, CDK8 and CDC2L6/CDK11. The MED12, MED13, CCNC and CDK8 subunits form a distinct module termed the CDK8 module. Mediator containing the CDK8 module is less active than Mediator lacking this module in supporting transcriptional activation. Individual preparations of the Mediator complex lacking one or more distinct subunits have been variously termed ARC, CRSP, DRIP, PC2, SMCC and TRAP. As to expression, ubiquitous.

It is found in the nucleus. Functionally, component of the Mediator complex, a coactivator involved in the regulated transcription of nearly all RNA polymerase II-dependent genes. Mediator functions as a bridge to convey information from gene-specific regulatory proteins to the basal RNA polymerase II transcription machinery. Mediator is recruited to promoters by direct interactions with regulatory proteins and serves as a scaffold for the assembly of a functional preinitiation complex with RNA polymerase II and the general transcription factors. This Homo sapiens (Human) protein is Mediator of RNA polymerase II transcription subunit 13.